The primary structure comprises 473 residues: Sensor histidine kinase YclK (473 aa).

Residues 1–9 (MMKIKYLYQ) are Cytoplasmic-facing. Residues 10–30 (LLLSHISILILAFVIIISLFS) form a helical membrane-spanning segment. Residues 31–164 (HFVKEFAYQN…GVEQMVNQVN (134 aa)) are Extracellular-facing. The chain crosses the membrane as a helical span at residues 165–185 (LYMFYAVISTLVITILVSWLL). The Cytoplasmic portion of the chain corresponds to 186 to 473 (SKFHVKRIQK…IRLPLTAKQQ (288 aa)). One can recognise an HAMP domain in the interval 187-239 (KFHVKRIQKLREATDKVASGDYDIHLENSYGDEIGVLASDFNIMAKKLKQSRD). Residues 254-470 (DVSHELKTPL…KFIIRLPLTA (217 aa)) enclose the Histidine kinase domain. His-257 is modified (phosphohistidine; by autocatalysis).

The protein localises to the cell membrane. It carries out the reaction ATP + protein L-histidine = ADP + protein N-phospho-L-histidine.. Its function is as follows. Could be member of the two-component regulatory system YclK/YclJ. Potentially phosphorylates YclJ. This chain is Sensor histidine kinase YclK (yclK), found in Bacillus subtilis (strain 168).